The sequence spans 359 residues: Insulin gene enhancer protein ISL-2 (359 aa).

2 LIM zinc-binding domains span residues 25–86 (AMCV…RLFG) and 87–149 (IKCA…LLER). Residues 151-190 (AAGSPRSPGPLPGARGLHLPDAGSGRQPSLRTHVHKQAEK) form a disordered region. Phosphoserine is present on residues Ser-154 and Ser-157. The segment at residues 191 to 250 (TTRVRTVLNEKQLHTLRTCYAANPRPDALMKEQLVEMTGLSPRVIRVWFQNKRCKDKKKS) is a DNA-binding region (homeobox). Residues 272–301 (GTPLVAGSPIRHENAVQGSAVEVQTYQPPW) are LIM-binding domain (LID). Ser-279 is modified (phosphoserine). Positions 326-336 (ESGSLGNSSGS) are enriched in low complexity. The disordered stretch occupies residues 326–359 (ESGSLGNSSGSDVTSLSSQLPDTPNSMVPSPVET). Positions 337–359 (DVTSLSSQLPDTPNSMVPSPVET) are enriched in polar residues.

Interacts with LHX4.

It is found in the nucleus. Functionally, transcriptional factor that defines subclasses of motoneurons that segregate into columns in the spinal cord and select distinct axon pathways. The polypeptide is Insulin gene enhancer protein ISL-2 (Isl2) (Mus musculus (Mouse)).